The following is a 621-amino-acid chain: Glutathione-regulated potassium-efflux system protein KefC (621 aa).

The next 12 helical transmembrane spans lie at 4–24, 26–46, 54–74, 90–110, 114–134, 151–171, 178–198, 218–238, 270–290, 294–314, 327–347, and 359–379; these read HTLI…PVAV, LGLG…PWGF, SILH…GLEL, GALQ…LLGM, VAEL…MQAM, VLLF…LLAV, LGAF…VILL, VFSA…EEAG, GLLL…GTLV, LRIL…LWLI, WFAV…GAAQ, and ALTL…VLLT. The RCK N-terminal domain occupies 399–518; the sequence is QPRVIIAGFG…AGVETPERET (120 aa). Residues 591–621 are disordered; sequence LSLTQRHGWQGTEEGKHTGDPRDEPESKPTV. Positions 603-621 are enriched in basic and acidic residues; it reads EEGKHTGDPRDEPESKPTV.

This sequence belongs to the monovalent cation:proton antiporter 2 (CPA2) transporter (TC 2.A.37) family. KefC subfamily. As to quaternary structure, homodimer. Interacts with the regulatory subunit KefF.

The protein localises to the cell inner membrane. In terms of biological role, pore-forming subunit of a potassium efflux system that confers protection against electrophiles. Catalyzes K(+)/H(+) antiport. The protein is Glutathione-regulated potassium-efflux system protein KefC of Enterobacter sp. (strain 638).